The primary structure comprises 424 residues: Histidinol dehydrogenase (424 aa).

3 residues coordinate NAD(+): Tyr-121, Gln-183, and Asn-206. Positions 229, 251, and 254 each coordinate substrate. Zn(2+) is bound by residues Gln-251 and His-254. Active-site proton acceptor residues include Glu-319 and His-320. 4 residues coordinate substrate: His-320, Asp-353, Glu-407, and His-412. Zn(2+) is bound at residue Asp-353. His-412 is a Zn(2+) binding site.

The protein belongs to the histidinol dehydrogenase family. Zn(2+) serves as cofactor.

It catalyses the reaction L-histidinol + 2 NAD(+) + H2O = L-histidine + 2 NADH + 3 H(+). It participates in amino-acid biosynthesis; L-histidine biosynthesis; L-histidine from 5-phospho-alpha-D-ribose 1-diphosphate: step 9/9. Functionally, catalyzes the sequential NAD-dependent oxidations of L-histidinol to L-histidinaldehyde and then to L-histidine. This is Histidinol dehydrogenase from Geobacillus kaustophilus (strain HTA426).